A 338-amino-acid chain; its full sequence is Activator of 90 kDa heat shock protein ATPase homolog 1 (338 aa).

Lysine 3 is modified (N6-acetyllysine). A Glycyl lysine isopeptide (Lys-Gly) (interchain with G-Cter in SUMO1) cross-link involves residue lysine 182. Residue serine 193 is modified to Phosphoserine. Lysine 203 is covalently cross-linked (Glycyl lysine isopeptide (Lys-Gly) (interchain with G-Cter in SUMO2)). The residue at position 212 (lysine 212) is an N6-acetyllysine. The residue at position 223 (tyrosine 223) is a Phosphotyrosine; by ABL.

It belongs to the AHA1 family. In terms of assembly, interacts with HSPCA/HSP90. Interacts with HSP90AA1; the interaction activates HSP90AA1 ATPase activity. Interacts with HSP90AB1. Interacts with GCH1. Interacts with SRPK1. Interacts with FLCN. Post-translationally, phosphorylation at Tyr-223 enhances binding to chaperone HSP90AA1.

It is found in the cytoplasm. It localises to the cytosol. The protein localises to the endoplasmic reticulum. Functionally, acts as a co-chaperone of HSP90AA1. Activates the ATPase activity of HSP90AA1 leading to increase in its chaperone activity. Competes with the inhibitory co-chaperone FNIP1 for binding to HSP90AA1, thereby providing a reciprocal regulatory mechanism for chaperoning of client proteins. Competes with the inhibitory co-chaperone TSC1 for binding to HSP90AA1, thereby providing a reciprocal regulatory mechanism for chaperoning of client proteins. The polypeptide is Activator of 90 kDa heat shock protein ATPase homolog 1 (Ahsa1) (Mus musculus (Mouse)).